A 413-amino-acid polypeptide reads, in one-letter code: Ras association domain-containing protein 5 (413 aa).

The interval 1-105 (MASPAIGQRP…RDVRSIFEQP (105 aa)) is disordered. A compositionally biased stretch (basic and acidic residues) spans 61–74 (ARGDPEPTPRDCRH). A Phorbol-ester/DAG-type zinc finger spans residues 117 to 165 (GHRFAELALRGGPGWCDLCGREVLRQALRCANCKFTCHPECRSLIQLDC). Residues Ser177 and Ser274 each carry the phosphoserine modification. In terms of domain architecture, Ras-associating spans 265–359 (PAATTDKRTS…LSFVLKENET (95 aa)). A Phosphothreonine modification is found at Thr347. Positions 361–408 (DVEWDAFSIPELQNFLTILEKEEQDKIHQLQKKYNKFRQKLEEALRES) constitute an SARAH domain.

In terms of assembly, interacts directly with activated HRAS; a RASSF5-STK4/MST1 complex probably associates with activated HRAS. Interacts with KRAS. Probably interacts with Ras-like GTPases RRAS, MRAS, RAP1B, RAP2A and RALA. Interacts with RRAS2. Can self-associate. Interacts with RSSF1 isoform A. The RSSF1 isoform A-RSSF5 heterodimer probably mediates the association of RSSF1 with HRAS. Isoform 2 interacts with activated RAP1A and ITGAL/LFA-1. Binds STK4/MST1, inhibiting STK4/MST1 autoactivation.

The protein localises to the cytoplasm. Its subcellular location is the cytoskeleton. Its function is as follows. Potential tumor suppressor. Seems to be involved in lymphocyte adhesion by linking RAP1A activation upon T-cell receptor or chemokine stimulation to integrin activation. Stimulates lymphocyte polarization and the patch-like distribution of ITGAL/LFA-1, resulting in an enhanced adhesion to ICAM1. Together with RAP1A may participate in regulation of microtubule growth. The association with activated RAP1A is required for directional movement of endothelial cells during wound healing. May be involved in regulation of Ras apoptotic function. The RASSF5-STK4/MST1 complex may mediate HRAS and KRAS induced apoptosis. This Rattus norvegicus (Rat) protein is Ras association domain-containing protein 5 (Rassf5).